Consider the following 451-residue polypeptide: AAA-ATPase At3g50940 (451 aa).

Residues 1–25 (MSSSSESHLATAKTALTAVASVAAA) form the signal peptide. 254-261 (GPPGTGKS) is a binding site for ATP.

This sequence belongs to the AAA ATPase family. BCS1 subfamily. Requires Mg(2+) as cofactor.

It catalyses the reaction ATP + H2O = ADP + phosphate + H(+). This chain is AAA-ATPase At3g50940, found in Arabidopsis thaliana (Mouse-ear cress).